An 83-amino-acid chain; its full sequence is MSSGGLLLLLGLLTLWEGLTPVSSKDHPRFCELPADPGPCNGLFQAFYYNPVQRTCLKFRYGGCKGNPNTFKTIEECKRTCAA.

The N-terminal stretch at methionine 1–serine 24 is a signal peptide. A BPTI/Kunitz inhibitor domain is found at cysteine 31 to cysteine 81. Disulfide bonds link cysteine 31-cysteine 81, cysteine 40-cysteine 64, and cysteine 56-cysteine 77.

It belongs to the venom Kunitz-type family. In terms of tissue distribution, expressed by the venom gland.

It localises to the secreted. Serine protease inhibitor. The sequence is that of Kunitz-type serine protease inhibitor mulgin-4 from Pseudechis australis (Mulga snake).